The sequence spans 140 residues: ATP synthase epsilon chain (140 aa).

The protein belongs to the ATPase epsilon chain family. As to quaternary structure, F-type ATPases have 2 components, CF(1) - the catalytic core - and CF(0) - the membrane proton channel. CF(1) has five subunits: alpha(3), beta(3), gamma(1), delta(1), epsilon(1). CF(0) has three main subunits: a, b and c.

It is found in the cell inner membrane. Its function is as follows. Produces ATP from ADP in the presence of a proton gradient across the membrane. The sequence is that of ATP synthase epsilon chain from Xanthomonas oryzae pv. oryzae (strain PXO99A).